The following is a 499-amino-acid chain: Tyrosine-protein kinase Blk (499 aa).

Positions 1-34 (MGLLSSKRQVSEKGKGWSPVKIRTQDKAPPPLPP) are disordered. Gly-2 is lipidated: N-myristoyl glycine. Positions 52–112 (EEERFVVALF…PSNFVAPVET (61 aa)) constitute an SH3 domain. The 97-residue stretch at 118–214 (WFFRTISRKD…GLCQKLTLPC (97 aa)) folds into the SH2 domain. In terms of domain architecture, Protein kinase spans 235-488 (LKLVRKLGSG…FLQSVLEDFY (254 aa)). ATP is bound by residues 241-249 (LGSGQFGEV) and Lys-263. The Proton acceptor role is filled by Asp-354. A Phosphotyrosine; by autocatalysis modification is found at Tyr-383.

This sequence belongs to the protein kinase superfamily. Tyr protein kinase family. SRC subfamily. As to quaternary structure, interacts with CBL (via SH2 domain). Interacts with CD79A and CD79B (via SH2 domain). Post-translationally, phosphorylated on tyrosine residues after antibody-mediated surface engagement of the B-cell antigen receptor (BCR). In terms of processing, ubiquitination of activated BLK by the UBE3A ubiquitin protein ligase leads to its degradation by the ubiquitin-proteasome pathway. Expressed in immature Vgamma2 gamma-delta T-cells (at protein level). Expressed in the B-cell lineage.

It is found in the cell membrane. The enzyme catalyses L-tyrosyl-[protein] + ATP = O-phospho-L-tyrosyl-[protein] + ADP + H(+). With respect to regulation, antibody-mediated surface engagement of the B-cell antigen receptor (BCR) which results in the phosphorylation of BLK on tyrosine residues, stimulates the enzymatic activity. Its function is as follows. Non-receptor tyrosine kinase involved in B-lymphocyte development, differentiation and signaling. B-cell receptor (BCR) signaling requires a tight regulation of several protein tyrosine kinases and phosphatases, and associated coreceptors. Binding of antigen to the B-cell antigen receptor (BCR) triggers signaling that ultimately leads to B-cell activation. Signaling through BLK plays an important role in transmitting signals through surface immunoglobulins and supports the pro-B to pre-B transition, as well as the signaling for growth arrest and apoptosis downstream of B-cell receptor. Specifically binds and phosphorylates CD79A at 'Tyr-188'and 'Tyr-199', as well as CD79B at 'Tyr-196' and 'Tyr-207'. Also phosphorylates the immunoglobulin G receptor FCGR2. With FYN and LYN, plays an essential role in pre-B-cell receptor (pre-BCR)-mediated NF-kappa-B activation. Also contributes to BTK activation by indirectly stimulating BTK intramolecular autophosphorylation. In pancreatic islets, acts as a modulator of beta-cells function through the up-regulation of PDX1 and NKX6-1 and consequent stimulation of insulin secretion in response to glucose. Phosphorylates CGAS, promoting retention of CGAS in the cytosol. This is Tyrosine-protein kinase Blk (Blk) from Mus musculus (Mouse).